The following is a 261-amino-acid chain: Ribosomal RNA small subunit methyltransferase J (261 aa).

S-adenosyl-L-methionine-binding positions include 109-110 (RD), 125-126 (ER), and D179.

Belongs to the methyltransferase superfamily. RsmJ family.

The protein localises to the cytoplasm. The catalysed reaction is guanosine(1516) in 16S rRNA + S-adenosyl-L-methionine = N(2)-methylguanosine(1516) in 16S rRNA + S-adenosyl-L-homocysteine + H(+). Specifically methylates the guanosine in position 1516 of 16S rRNA. This chain is Ribosomal RNA small subunit methyltransferase J, found in Pseudomonas paraeruginosa (strain DSM 24068 / PA7) (Pseudomonas aeruginosa (strain PA7)).